Consider the following 47-residue polypeptide: Light-harvesting protein B800/850/890 alpha-2 chain (47 aa).

Over 1-12 (MWRMWKILDYRR) the chain is Cytoplasmic. The helical transmembrane segment at 13–33 (TVVLAHVGMAVLALLIHFILL) threads the bilayer. Histidine 29 serves as a coordination point for a bacteriochlorophyll. Topologically, residues 34 to 47 (STESFNWLEGNPYG) are periplasmic.

The protein belongs to the antenna complex alpha subunit family. As to quaternary structure, the core complex is formed by different alpha and beta chains, binding bacteriochlorophyll molecules, and arranged most probably in tetrameric structures disposed around the reaction center. The non-pigmented gamma chains may constitute additional components.

The protein localises to the cell inner membrane. Its function is as follows. Antenna complexes are light-harvesting systems, which transfer the excitation energy to the reaction centers. The polypeptide is Light-harvesting protein B800/850/890 alpha-2 chain (Halorhodospira halophila (strain DSM 244 / SL1) (Ectothiorhodospira halophila (strain DSM 244 / SL1))).